Consider the following 244-residue polypeptide: NAD(P)H-quinone oxidoreductase subunit K (244 aa).

Residues Cys60, Cys61, Cys125, and Cys156 each contribute to the [4Fe-4S] cluster site.

It belongs to the complex I 20 kDa subunit family. As to quaternary structure, NDH-1 can be composed of about 15 different subunits; different subcomplexes with different compositions have been identified which probably have different functions. [4Fe-4S] cluster is required as a cofactor.

The protein resides in the cellular thylakoid membrane. The catalysed reaction is a plastoquinone + NADH + (n+1) H(+)(in) = a plastoquinol + NAD(+) + n H(+)(out). It catalyses the reaction a plastoquinone + NADPH + (n+1) H(+)(in) = a plastoquinol + NADP(+) + n H(+)(out). Functionally, NDH-1 shuttles electrons from an unknown electron donor, via FMN and iron-sulfur (Fe-S) centers, to quinones in the respiratory and/or the photosynthetic chain. The immediate electron acceptor for the enzyme in this species is believed to be plastoquinone. Couples the redox reaction to proton translocation, and thus conserves the redox energy in a proton gradient. Cyanobacterial NDH-1 also plays a role in inorganic carbon-concentration. The polypeptide is NAD(P)H-quinone oxidoreductase subunit K (Prochlorococcus marinus (strain MIT 9515)).